A 424-amino-acid chain; its full sequence is Hemagglutinin-esterase (424 aa).

The signal sequence occupies residues 1–16; the sequence is MFLLPRFCLVCSIIGT. The interval 7–127 is esterase domain 1; sequence FCLVCSIIGT…NNDIWMQNKG (121 aa). Residues 17 to 392 lie on the Virion surface side of the membrane; the sequence is FGFENPPTNV…PICVYDPLPI (376 aa). Ser40 (nucleophile) is an active-site residue. Residues Cys44 and Cys65 are joined by a disulfide bond. N-linked (GlcNAc...) asparagine; by host glycans are attached at residues Asn54, Asn89, Asn153, Asn236, and Asn301. Cystine bridges form between Cys113–Cys162, Cys197–Cys276, and Cys205–Cys249. Residues 128 to 266 form a receptor binding region; it reads LFYTQVYKKM…GNYLAISNEL (139 aa). The esterase domain 2 stretch occupies residues 267-379; the sequence is LLTVPTKAIC…NCPTAASIIS (113 aa). Cys307 and Cys312 are disulfide-bonded. An N-linked (GlcNAc...) asparagine; by host glycan is attached at Asn316. Catalysis depends on charge relay system residues Asp326 and His329. Cysteines 347 and 371 form a disulfide. Asn358 carries an N-linked (GlcNAc...) asparagine; by host glycan. A helical membrane pass occupies residues 393–413; that stretch reads ILLGILLGVAVIVIVVLLLYF. At 414–424 the chain is on the intravirion side; the sequence is MVDNGIRQHYA.

This sequence belongs to the influenza type C/coronaviruses hemagglutinin-esterase family. In terms of assembly, homodimer; disulfide-linked. Forms a complex with the M protein in the pre-Golgi. Associates then with S-M complex to form a ternary complex S-M-HE. Post-translationally, N-glycosylated in the host RER.

It localises to the virion membrane. The protein localises to the host cell membrane. The enzyme catalyses N-acetyl-9-O-acetylneuraminate + H2O = N-acetylneuraminate + acetate + H(+). It catalyses the reaction N-acetyl-4-O-acetylneuraminate + H2O = N-acetylneuraminate + acetate + H(+). In terms of biological role, structural protein that makes short spikes at the surface of the virus. Contains receptor binding and receptor-destroying activities. Mediates de-O-acetylation of N-acetyl-4-O-acetylneuraminic acid, which is probably the receptor determinant recognized by the virus on the surface of erythrocytes and susceptible cells. This receptor-destroying activity is important for virus release as it probably helps preventing self-aggregation and ensures the efficient spread of the progeny virus from cell to cell. May serve as a secondary viral attachment protein for initiating infection, the spike protein being the major one. May become a target for both the humoral and the cellular branches of the immune system. The chain is Hemagglutinin-esterase from Sus scrofa (Pig).